A 359-amino-acid polypeptide reads, in one-letter code: DNA-directed RNA polymerase RPB3-11 homolog (359 aa).

This sequence in the N-terminal section; belongs to the archaeal RpoD/eukaryotic RPB3 RNA polymerase subunit family. The protein in the C-terminal section; belongs to the archaeal RpoL/eukaryotic RPB11/RPC19 RNA polymerase subunit family. Part of the viral DNA-directed RNA polymerase that consists of 8 polII-like subunits (RPB1, RPB2, RPB3, RPB5, RPB6, RPB7, RPB9, RPB10), a capping enzyme and a termination factor.

Its subcellular location is the host cytoplasm. It is found in the virion. Functionally, component of the DNA-directed RNA polymerase (RNAP) that catalyzes the transcription in the cytoplasm of viral DNA into RNA using the four ribonucleoside triphosphates as substrates. The sequence is that of DNA-directed RNA polymerase RPB3-11 homolog from Ornithodoros (relapsing fever ticks).